The chain runs to 197 residues: Phosphoheptose isomerase (197 aa).

Residues 34–196 enclose the SIS domain; it reads MVQCLLGGNK…DRTLFPQDEQ (163 aa). Residue 49–51 participates in substrate binding; the sequence is NGG. The Zn(2+) site is built by histidine 58 and glutamate 62. Substrate-binding positions include glutamate 62, 91-92, 117-119, serine 122, and glutamine 172; these read ND and STS. Zn(2+) contacts are provided by glutamine 172 and histidine 180.

Belongs to the SIS family. GmhA subfamily. Homotetramer. Zn(2+) serves as cofactor.

Its subcellular location is the cytoplasm. The catalysed reaction is 2 D-sedoheptulose 7-phosphate = D-glycero-alpha-D-manno-heptose 7-phosphate + D-glycero-beta-D-manno-heptose 7-phosphate. Its pathway is carbohydrate biosynthesis; D-glycero-D-manno-heptose 7-phosphate biosynthesis; D-glycero-alpha-D-manno-heptose 7-phosphate and D-glycero-beta-D-manno-heptose 7-phosphate from sedoheptulose 7-phosphate: step 1/1. In terms of biological role, catalyzes the isomerization of sedoheptulose 7-phosphate in D-glycero-D-manno-heptose 7-phosphate. In Shewanella oneidensis (strain ATCC 700550 / JCM 31522 / CIP 106686 / LMG 19005 / NCIMB 14063 / MR-1), this protein is Phosphoheptose isomerase.